Reading from the N-terminus, the 218-residue chain is LHFPL tetraspan subfamily member 3 protein (218 aa).

Helical transmembrane passes span 22-42 (IGVL…VCFI), 96-116 (FFIG…GLFF), 126-146 (ICAW…MIFP), and 177-197 (ILAI…FVLG).

This sequence belongs to the LHFP family.

The protein localises to the membrane. In Xenopus laevis (African clawed frog), this protein is LHFPL tetraspan subfamily member 3 protein.